The primary structure comprises 183 residues: Pectinesterase inhibitor 8 (183 aa).

Residues 1–30 (MAQRASRRPAAAAAAVVVAVVLAVSGGVGA) form the signal peptide. 2 cysteine pairs are disulfide-bonded: Cys36–Cys51 and Cys107–Cys147.

This sequence belongs to the PMEI family.

Its subcellular location is the secreted. The protein resides in the extracellular space. The protein localises to the apoplast. Its function is as follows. Pectin methylesterase (PME) inhibitor that inhibits PME in vitro. In Oryza sativa subsp. japonica (Rice), this protein is Pectinesterase inhibitor 8.